We begin with the raw amino-acid sequence, 377 residues long: Glutamate 5-kinase (377 aa).

Lys17 is an ATP binding site. Substrate-binding residues include Ser56, Asp143, and Asn155. 217–223 contributes to the ATP binding site; sequence SGGMFSK. The PUA domain maps to 282 to 360; it reads AGDLVIDDGA…CEIESILGKC (79 aa).

This sequence belongs to the glutamate 5-kinase family.

The protein localises to the cytoplasm. The catalysed reaction is L-glutamate + ATP = L-glutamyl 5-phosphate + ADP. It functions in the pathway amino-acid biosynthesis; L-proline biosynthesis; L-glutamate 5-semialdehyde from L-glutamate: step 1/2. Catalyzes the transfer of a phosphate group to glutamate to form L-glutamate 5-phosphate. This chain is Glutamate 5-kinase, found in Maridesulfovibrio salexigens (strain ATCC 14822 / DSM 2638 / NCIMB 8403 / VKM B-1763) (Desulfovibrio salexigens).